The following is a 1111-amino-acid chain: ATP-dependent DNA helicase mph1 (1111 aa).

2 stretches are compositionally biased toward acidic residues: residues 1 to 18 (MSVS…EIDD) and 47 to 65 (VFDE…DEFQ). 4 disordered regions span residues 1-81 (MSVS…EDVE), 101-144 (FVTQ…HQPD), 210-240 (AFDS…RTNR), and 259-280 (IPSQ…PTHH). Polar residues-rich tracts occupy residues 132-143 (PTTTTVDASHQP) and 215-238 (LSLS…QFRT). A Helicase ATP-binding domain is found at 306–474 (IAQRGLFHNL…AVIDGLGIAK (169 aa)). 319 to 326 (LPTGLGKT) lines the ATP pocket. The DEAH box signature appears at 422-425 (DEAH). In terms of domain architecture, Helicase C-terminal spans 644–818 (YLKQVVLNHF…GTRFTFHDDT (175 aa)). 3 disordered regions span residues 836–898 (IDIP…RKPT), 998–1047 (SVLS…CTPE), and 1092–1111 (AERH…DTEE). A compositionally biased stretch (basic residues) spans 852 to 864 (KRARPPKRPPKKF).

Belongs to the DEAD box helicase family. DEAH subfamily. FANCM sub-subfamily. As to quaternary structure, interacts with the MHF histone-fold complex to form the FANCM-MHF complex.

The protein resides in the nucleus. The enzyme catalyses ATP + H2O = ADP + phosphate + H(+). In terms of biological role, ATP-dependent DNA helicase involved in DNA damage repair by homologous recombination and in genome maintenance. Capable of unwinding D-loops. Plays a role in limiting crossover recombinants during mitotic DNA double-strand break (DSB) repair. Component of a FANCM-MHF complex which promotes gene conversion at blocked replication forks, probably by reversal of the stalled fork. This chain is ATP-dependent DNA helicase mph1, found in Neosartorya fischeri (strain ATCC 1020 / DSM 3700 / CBS 544.65 / FGSC A1164 / JCM 1740 / NRRL 181 / WB 181) (Aspergillus fischerianus).